Here is a 306-residue protein sequence, read N- to C-terminus: Anamorsin homolog (306 aa).

A compositionally biased stretch (basic and acidic residues) spans 1-25 (MVPPREDVTVRIVCERRRTAGKEAR). Residues 1–51 (MVPPREDVTVRIVCERRRTAGKEARPPPSAKPTPGNTSSHPNAKETHRSNE) are disordered. Positions 59–190 (KQSHRRSIMA…RRNNTTNSVA (132 aa)) are N-terminal SAM-like domain. The segment at 191-218 (TLNFASNNNNGNDLLIDEDNLLTDASNL) is linker. [2Fe-2S] cluster contacts are provided by cysteine 236, cysteine 242, cysteine 245, and cysteine 247. Residues 236 to 247 (CSGRAPCDDCTC) form a fe-S binding site A region. The span at 252–265 (GAKEGNSEQPKEIK) shows a compositional bias: basic and acidic residues. Residues 252 to 272 (GAKEGNSEQPKEIKSSSCGKC) form a disordered region. Positions 269, 272, 280, and 283 each coordinate [4Fe-4S] cluster. Short sequence motifs (cx2C motif) lie at residues 269-272 (CGKC) and 280-283 (CASC). A fe-S binding site B region spans residues 269–283 (CGKCSLGDAFRCASC).

It belongs to the anamorsin family. In terms of assembly, monomer. [2Fe-2S] cluster is required as a cofactor. [4Fe-4S] cluster serves as cofactor.

The protein resides in the cytoplasm. It is found in the mitochondrion intermembrane space. In terms of biological role, component of the cytosolic iron-sulfur (Fe-S) protein assembly (CIA) machinery. Required for the maturation of extramitochondrial Fe-S proteins. Part of an electron transfer chain functioning in an early step of cytosolic Fe-S biogenesis, facilitating the de novo assembly of a [4Fe-4S] cluster on the cytosolic Fe-S scaffold complex. Electrons are transferred from NADPH via a FAD- and FMN-containing diflavin oxidoreductase. Together with the diflavin oxidoreductase, also required for the assembly of the diferric tyrosyl radical cofactor of ribonucleotide reductase (RNR), probably by providing electrons for reduction during radical cofactor maturation in the catalytic small subunit. The polypeptide is Anamorsin homolog (Phaeodactylum tricornutum (strain CCAP 1055/1)).